Here is a 263-residue protein sequence, read N- to C-terminus: 7beta-hydroxysteroid dehydrogenase (263 aa).

NADP(+) contacts are provided by residues 17–21 (TEGVG), 40–41 (RR), and 66–67 (DF). Catalysis depends on tyrosine 156, which acts as the Proton acceptor. Residue serine 240 coordinates NADP(+).

Belongs to the short-chain dehydrogenases/reductases (SDR) family. In terms of assembly, homodimer.

It carries out the reaction a 7beta-hydroxysteroid + NADP(+) = a 7-oxosteroid + NADPH + H(+). The catalysed reaction is 7-oxolithocholate + NADPH + H(+) = ursodeoxycholate + NADP(+). The enzyme catalyses 7beta-hydroxy-3,12-dioxo-5beta-cholan-24-oate + NADP(+) = dehydrocholate + NADPH + H(+). It catalyses the reaction ursocholate + NADP(+) = 3alpha,12alpha-dihydroxy-7-oxo-5beta-cholanate + NADPH + H(+). Its function is as follows. 7beta-hydroxysteroid dehydrogenase that catalyzes the reduction of the 7-oxo group of 7-oxo-lithocholate (7-oxo-LCA), to yield ursodeoxycholate (UDCA). As C.aerofaciens is an intestinal bacterium, this enzyme probably contributes to the formation of UDCA in the human colon. UDCA is regarded as a chemopreventive beneficial secondary bile acid due to its low hydrophobicity; it protects hepatocytes and bile duct epithelial cells against necrosis and apoptosis induced by more hydrophobic secondary bile acids like deoxycholate (DCA). This enzyme is also able to catalyze the reverse reaction, i.e. the oxidation of the 7beta-hydroxy group of UDCA to 7-oxo-LCA. To a lesser extent, is also active on the taurine- and glycine-conjugates of ursodeoxycholate. It is specific for NADPH/NADP(+) as the electron acceptor/donor since it is not active with NADH/NAD(+). In the presence of NADPH, 7beta-HSDH can also reduce dehydrocholate. And is also able to oxidize ursocholate. This Collinsella aerofaciens (strain ATCC 25986 / DSM 3979 / JCM 10188 / KCTC 3647 / NCTC 11838 / VPI 1003) protein is 7beta-hydroxysteroid dehydrogenase.